Reading from the N-terminus, the 452-residue chain is Phosphoglucosamine mutase (452 aa).

The active-site Phosphoserine intermediate is S101. Mg(2+)-binding residues include S101, D241, D243, and D245. S101 carries the phosphoserine modification.

This sequence belongs to the phosphohexose mutase family. It depends on Mg(2+) as a cofactor. Activated by phosphorylation.

The catalysed reaction is alpha-D-glucosamine 1-phosphate = D-glucosamine 6-phosphate. Functionally, catalyzes the conversion of glucosamine-6-phosphate to glucosamine-1-phosphate. In Lactococcus lactis subsp. lactis (strain IL1403) (Streptococcus lactis), this protein is Phosphoglucosamine mutase.